Here is a 229-residue protein sequence, read N- to C-terminus: Transcriptional activator protein IrlR (229 aa).

One can recognise a Response regulatory domain in the interval 2–115; the sequence is RILIVEDEPK…ELVARVRSIL (114 aa). Asp51 bears the 4-aspartylphosphate mark. The segment at residues 123–221 is a DNA-binding region (ompR/PhoB-type); that stretch reads STVLRIADLE…VRGMGYVLEV (99 aa).

Post-translationally, phosphorylated by IrlS.

Member of the two-component regulatory system IrlR/IrlS. May be involved in invasion of eukaryotic cells and heavy-metal resistance. The chain is Transcriptional activator protein IrlR (irlR) from Burkholderia pseudomallei (strain 1026b).